The following is a 204-amino-acid chain: Imidazoleglycerol-phosphate dehydratase (204 aa).

Belongs to the imidazoleglycerol-phosphate dehydratase family.

It is found in the cytoplasm. It catalyses the reaction D-erythro-1-(imidazol-4-yl)glycerol 3-phosphate = 3-(imidazol-4-yl)-2-oxopropyl phosphate + H2O. It functions in the pathway amino-acid biosynthesis; L-histidine biosynthesis; L-histidine from 5-phospho-alpha-D-ribose 1-diphosphate: step 6/9. The sequence is that of Imidazoleglycerol-phosphate dehydratase from Rhodococcus opacus (strain B4).